Consider the following 163-residue polypeptide: Large ribosomal subunit protein uL13m (163 aa).

Residue Ser2 is modified to N-acetylserine. A propeptide spanning residues Ser2–Lys4 is cleaved from the precursor.

Belongs to the universal ribosomal protein uL13 family. As to quaternary structure, component of the mitochondrial large ribosomal subunit (mt-LSU). Mature yeast 74S mitochondrial ribosomes consist of a small (37S) and a large (54S) subunit. The 37S small subunit contains a 15S ribosomal RNA (15S mt-rRNA) and 34 different proteins. The 54S large subunit contains a 21S rRNA (21S mt-rRNA) and 46 different proteins.

It localises to the mitochondrion. In terms of biological role, component of the mitochondrial ribosome (mitoribosome), a dedicated translation machinery responsible for the synthesis of mitochondrial genome-encoded proteins, including at least some of the essential transmembrane subunits of the mitochondrial respiratory chain. The mitoribosomes are attached to the mitochondrial inner membrane and translation products are cotranslationally integrated into the membrane. The sequence is that of Large ribosomal subunit protein uL13m (MRPL23) from Saccharomyces cerevisiae (strain ATCC 204508 / S288c) (Baker's yeast).